The following is a 608-amino-acid chain: Membrane protein insertase YidC (608 aa).

Residues 8-28 traverse the membrane as a helical segment; the sequence is LLLATALSFLVILGWYFFFPP. The tract at residues 33-61 is disordered; sequence PQPATEVTETAPQGDTTAPAAAPSAGAAT. 5 helical membrane-spanning segments follow: residues 378 to 398, 448 to 468, 482 to 502, 506 to 526, and 542 to 562; these read MGVA…PLAY, LPIL…FVTL, LSVP…WAAP, SLLS…SMWV, and IFAW…SGLV.

It belongs to the OXA1/ALB3/YidC family. Type 1 subfamily. Interacts with the Sec translocase complex via SecD. Specifically interacts with transmembrane segments of nascent integral membrane proteins during membrane integration.

The protein resides in the cell inner membrane. In terms of biological role, required for the insertion and/or proper folding and/or complex formation of integral membrane proteins into the membrane. Involved in integration of membrane proteins that insert both dependently and independently of the Sec translocase complex, as well as at least some lipoproteins. Aids folding of multispanning membrane proteins. The polypeptide is Membrane protein insertase YidC (Ruegeria sp. (strain TM1040) (Silicibacter sp.)).